Reading from the N-terminus, the 579-residue chain is Small conductance calcium-activated potassium channel protein 2 (579 aa).

Disordered regions lie at residues Met1–Ala54 and Thr90–Gln115. Residues Thr90–Ser103 are compositionally biased toward gly residues. The chain crosses the membrane as a helical span at residues Ala138 to Gly158. Tyr160 bears the Phosphotyrosine mark. The chain crosses the membrane as a helical span at residues Leu168 to Tyr188. A helical transmembrane segment spans residues Ile214 to Thr234. Residues Ile256–His276 form a helical membrane-spanning segment. Residues Leu305–Ala325 traverse the membrane as a helical segment. Positions Phe345–Val365 form an intramembrane region, pore-forming. A helical transmembrane segment spans residues Val374 to Ala394. The segment at Asp412–Ile488 is calmodulin-binding. The tract at residues Val551–Ser579 is disordered. Low complexity predominate over residues Ser568–Ser579.

This sequence belongs to the potassium channel KCNN family. KCa2.2/KCNN2 subfamily. Homodimer. Heteromultimer with KCNN1 and KCNN3. The complex is composed of 4 channel subunits each of which binds to a calmodulin subunit which regulates the channel activity through calcium-binding. Interacts (via N-terminal domain) with MPP2. In terms of tissue distribution, expressed in atrial myocytes (at protein level). Widely expressed.

Its subcellular location is the membrane. It localises to the cytoplasm. The protein resides in the myofibril. It is found in the sarcomere. The protein localises to the z line. It carries out the reaction K(+)(in) = K(+)(out). Inhibited by bee venom neurotoxin apamin. Inhibited by UCL 1684 and tetraethylammonium (TEA). Its function is as follows. Small conductance calcium-activated potassium channel that mediates the voltage-independent transmembrane transfer of potassium across the cell membrane through a constitutive interaction with calmodulin which binds the intracellular calcium allowing its opening. The current is characterized by a voltage-independent activation, an intracellular calcium concentration increase-dependent activation and a single-channel conductance of about 3 picosiemens. Also presents an inwardly rectifying current, thus reducing its already small outward conductance of potassium ions, which is particularly the case when the membrane potential displays positive values, above + 20 mV. The inward rectification could be due to a blockade of the outward current by intracellular divalent cations such as calcium and magnesium and could also be due to an intrinsic property of the channel pore, independent of intracellular divalent ions. There are three positively charged amino acids in the S6 transmembrane domain, close to the pore, that collectively control the conductance and rectification through an electrostatic mechanism. Additionally, electrostatic contributions from these residues also play an important role in determining the intrinsic open probability of the channel in the absence of calcium, affecting the apparent calcium affinity for activation. Forms an heteromeric complex with calmodulin, which is constitutively associated in a calcium-independent manner. Channel opening is triggered when calcium binds the calmodulin resulting in a rotary movement leading to the formation of the dimeric complex to open the gate. Plays a role in the repolarization phase of cardiac action potential. The chain is Small conductance calcium-activated potassium channel protein 2 from Homo sapiens (Human).